The following is a 347-amino-acid chain: tRNA pseudouridine synthase D (347 aa).

Residue Asp-81 is the Nucleophile of the active site. A TRUD domain is found at 158-305 (GVPNYFGSQR…RHDRREIALK (148 aa)).

This sequence belongs to the pseudouridine synthase TruD family.

The catalysed reaction is uridine(13) in tRNA = pseudouridine(13) in tRNA. In terms of biological role, responsible for synthesis of pseudouridine from uracil-13 in transfer RNAs. The protein is tRNA pseudouridine synthase D of Vibrio parahaemolyticus serotype O3:K6 (strain RIMD 2210633).